Here is a 203-residue protein sequence, read N- to C-terminus: GTP-binding protein yptV1 (203 aa).

GTP is bound by residues 15–23 (GDSGVGKSC), 33–40 (YTESYIST), 63–67 (DTAGQ), 121–124 (NKSD), and 151–153 (SAK). The Effector region motif lies at 37–45 (YISTIGVDF). The tract at residues 173 to 203 (MASQPVPPKPGGPVVRPTEGKPINNKSSSCC) is disordered. Residues C202 and C203 are each lipidated (S-geranylgeranyl cysteine).

Belongs to the small GTPase superfamily. Rab family.

The protein localises to the cell membrane. Protein transport. Probably involved in vesicular traffic. The chain is GTP-binding protein yptV1 (YPTV1) from Volvox carteri (Green alga).